The following is a 137-amino-acid chain: Fluoride-specific ion channel FluC 1 (137 aa).

4 helical membrane passes run 4–24, 37–57, 67–87, and 98–118; these read LIYI…YYLG, LATL…TTYI, VITG…TLSV, and WGIA…MSGL. Na(+)-binding residues include Gly-77 and Thr-80.

Belongs to the fluoride channel Fluc/FEX (TC 1.A.43) family.

The protein resides in the cell membrane. The catalysed reaction is fluoride(in) = fluoride(out). Its activity is regulated as follows. Na(+) is not transported, but it plays an essential structural role and its presence is essential for fluoride channel function. Functionally, fluoride-specific ion channel. Important for reducing fluoride concentration in the cell, thus reducing its toxicity. This chain is Fluoride-specific ion channel FluC 1, found in Bacillus anthracis.